A 307-amino-acid polypeptide reads, in one-letter code: Acetaldehyde dehydrogenase 1 (307 aa).

Cys-131 serves as the catalytic Acyl-thioester intermediate. NAD(+) contacts are provided by residues 162-170 (SIGPGTRKN) and Asn-273.

The protein belongs to the acetaldehyde dehydrogenase family.

The catalysed reaction is acetaldehyde + NAD(+) + CoA = acetyl-CoA + NADH + H(+). The polypeptide is Acetaldehyde dehydrogenase 1 (salG) (Metapseudomonas furukawaii (Pseudomonas furukawaii)).